The chain runs to 360 residues: Phosphoserine aminotransferase (360 aa).

Arg-41 is a binding site for L-glutamate. The pyridoxal 5'-phosphate site is built by Trp-101, Thr-152, Asp-172, and Gln-195. At Lys-196 the chain carries N6-(pyridoxal phosphate)lysine. 237–238 (NT) is a binding site for pyridoxal 5'-phosphate.

This sequence belongs to the class-V pyridoxal-phosphate-dependent aminotransferase family. SerC subfamily. As to quaternary structure, homodimer. Pyridoxal 5'-phosphate is required as a cofactor.

It is found in the cytoplasm. The enzyme catalyses O-phospho-L-serine + 2-oxoglutarate = 3-phosphooxypyruvate + L-glutamate. It catalyses the reaction 4-(phosphooxy)-L-threonine + 2-oxoglutarate = (R)-3-hydroxy-2-oxo-4-phosphooxybutanoate + L-glutamate. It functions in the pathway amino-acid biosynthesis; L-serine biosynthesis; L-serine from 3-phospho-D-glycerate: step 2/3. The protein operates within cofactor biosynthesis; pyridoxine 5'-phosphate biosynthesis; pyridoxine 5'-phosphate from D-erythrose 4-phosphate: step 3/5. Functionally, catalyzes the reversible conversion of 3-phosphohydroxypyruvate to phosphoserine and of 3-hydroxy-2-oxo-4-phosphonooxybutanoate to phosphohydroxythreonine. The sequence is that of Phosphoserine aminotransferase from Burkholderia cenocepacia (strain ATCC BAA-245 / DSM 16553 / LMG 16656 / NCTC 13227 / J2315 / CF5610) (Burkholderia cepacia (strain J2315)).